The chain runs to 601 residues: Ubiquitin carboxyl-terminal hydrolase MINDY-2 (601 aa).

The segment at 1-205 (MENSPDSPQP…LCKEEEEDPA (205 aa)) is disordered. The segment covering 24–34 (EGRRRGGREAE) has biased composition (basic and acidic residues). Threonine 62 carries the post-translational modification Phosphothreonine. Serine 82 is subject to Phosphoserine. Composition is skewed to low complexity over residues 127 to 141 (EEPSSTGAPSSSCSE), 148 to 169 (SPSLDSLESFSNLHSFPSSSEF), and 186 to 195 (GAAGPPRAAP). Cysteine 244 (nucleophile) is an active-site residue. Histidine 426 (proton acceptor) is an active-site residue. Positions 485-537 (GQQDQIDQDYLMALSLQQEQQSQEINWEQIPEGISDLELAKKLQEEEDRRASQ) are ubiquitin-binding domain (UBD). Positions 534–601 (RASQYYQEQE…EKEKNSCVIL (68 aa)) are disordered. Low complexity predominate over residues 536–570 (SQYYQEQEQAQAVVTTTTPSTQAQQGQPAQASPSS). Basic and acidic residues predominate over residues 577–601 (SERKRKEPREKDKEKEKEKNSCVIL).

Belongs to the MINDY deubiquitinase family. FAM63 subfamily.

The catalysed reaction is Thiol-dependent hydrolysis of ester, thioester, amide, peptide and isopeptide bonds formed by the C-terminal Gly of ubiquitin (a 76-residue protein attached to proteins as an intracellular targeting signal).. Its function is as follows. Hydrolase that can remove 'Lys-48'-linked conjugated ubiquitin from proteins. Can also bind to polyubiquitin chains of different linkage types, including 'Lys-6', 'Lys-11', 'Lys-29', 'Lys-33' and 'Lys-63'. May play a regulatory role at the level of protein turnover. The chain is Ubiquitin carboxyl-terminal hydrolase MINDY-2 (Mindy2) from Mus musculus (Mouse).